Consider the following 279-residue polypeptide: Pantothenate synthetase (279 aa).

Met-26 to His-33 is a binding site for ATP. The active-site Proton donor is the His-33. Residue Gln-57 coordinates (R)-pantoate. Gln-57 contributes to the beta-alanine binding site. Gly-144–Asp-147 is a binding site for ATP. Gln-150 contributes to the (R)-pantoate binding site. Position 181–184 (Leu-181–Arg-184) interacts with ATP.

Belongs to the pantothenate synthetase family. As to quaternary structure, homodimer.

Its subcellular location is the cytoplasm. The catalysed reaction is (R)-pantoate + beta-alanine + ATP = (R)-pantothenate + AMP + diphosphate + H(+). The protein operates within cofactor biosynthesis; (R)-pantothenate biosynthesis; (R)-pantothenate from (R)-pantoate and beta-alanine: step 1/1. In terms of biological role, catalyzes the condensation of pantoate with beta-alanine in an ATP-dependent reaction via a pantoyl-adenylate intermediate. In Janthinobacterium sp. (strain Marseille) (Minibacterium massiliensis), this protein is Pantothenate synthetase.